The following is a 126-amino-acid chain: Large ribosomal subunit protein bL12 (126 aa).

The span at 36–55 shows a compositional bias: low complexity; it reads APAPAAAPAAGGDQGGAEAA. A disordered region spans residues 36-57; sequence APAPAAAPAAGGDQGGAEAAEQ.

This sequence belongs to the bacterial ribosomal protein bL12 family. Homodimer. Part of the ribosomal stalk of the 50S ribosomal subunit. Forms a multimeric L10(L12)X complex, where L10 forms an elongated spine to which 2 to 4 L12 dimers bind in a sequential fashion. Binds GTP-bound translation factors.

Forms part of the ribosomal stalk which helps the ribosome interact with GTP-bound translation factors. Is thus essential for accurate translation. The chain is Large ribosomal subunit protein bL12 from Natranaerobius thermophilus (strain ATCC BAA-1301 / DSM 18059 / JW/NM-WN-LF).